We begin with the raw amino-acid sequence, 308 residues long: Heme A synthase (308 aa).

Topologically, residues 1–8 (MFKKRNLK) are cytoplasmic. The helical transmembrane segment at 9 to 29 (WLSILATVIMAWVQLGGALVT) threads the bilayer. The Extracellular segment spans residues 30–67 (KTGSENGCGASWPLCHGALLPQNLPIATIIELSHRATS). An intrachain disulfide couples Cys-37 to Cys-44. The active site involves Glu-60. Heme o is bound at residue His-63. The helical transmembrane segment at 68 to 88 (ALSLIVVLWLVITAWKNIGYI) threads the bilayer. The Cytoplasmic portion of the chain corresponds to 89–93 (KEVKP). The helical transmembrane segment at 94 to 114 (LCIISVAFLLIQALVGAAAVL) threads the bilayer. The Extracellular portion of the chain corresponds to 115 to 123 (WQQNDYVLA). The helical transmembrane segment at 124–144 (LHFGISLISFSSVFVLTLIIF) threads the bilayer. His-125 contributes to the heme o binding site. Topologically, residues 145 to 161 (DVDQKYEANKVHIDRKL) are cytoplasmic. Residues 162–182 (RIYTWTMAICLYVGIYTGALV) traverse the membrane as a helical segment. Residues 183 to 215 (RHTKSSLAYGSWPLPFNDLIPHTEQDWVQLAHR) lie on the Extracellular side of the membrane. Position 214 (His-214) interacts with heme b. Residues 216 to 236 (TLALIASISVFLAFNYAIKHY) traverse the membrane as a helical segment. Residues 237 to 244 (QNNRTIRY) are Cytoplasmic-facing. A helical membrane pass occupies residues 245–265 (GYTAALLLIILQIVTGALSIF). The Extracellular segment spans residues 266–270 (THVNL). The chain crosses the membrane as a helical span at residues 271–291 (IIALLHALIITFEFGLIAYLI). His-276 is a heme b binding site. Residues 292 to 308 (VLLLRSQRVEKVKQNAY) lie on the Cytoplasmic side of the membrane.

This sequence belongs to the COX15/CtaA family. Type 1 subfamily. Interacts with CtaB. Heme b serves as cofactor.

The protein localises to the cell membrane. The catalysed reaction is Fe(II)-heme o + 2 A + H2O = Fe(II)-heme a + 2 AH2. The protein operates within porphyrin-containing compound metabolism; heme A biosynthesis; heme A from heme O: step 1/1. Its function is as follows. Catalyzes the conversion of heme O to heme A by two successive hydroxylations of the methyl group at C8. The first hydroxylation forms heme I, the second hydroxylation results in an unstable dihydroxymethyl group, which spontaneously dehydrates, resulting in the formyl group of heme A. The sequence is that of Heme A synthase from Staphylococcus carnosus (strain TM300).